The chain runs to 300 residues: 7-methylguanosine phosphate-specific 5'-nucleotidase (300 aa).

The Nucleophile role is filled by Asp41. Positions 41 and 43 each coordinate Mg(2+). Asp43 (proton donor) is an active-site residue. Glu88 is a binding site for CMP. Glu88 lines the N(7)-methyl-GMP pocket. Residues Ser156–Ala157 and Lys205 each bind substrate. Asp230 contributes to the Mg(2+) binding site. Lys256 is modified (N6-acetyllysine).

This sequence belongs to the pyrimidine 5'-nucleotidase family. Monomer.

It localises to the cytoplasm. The enzyme catalyses N(7)-methyl-GMP + H2O = N(7)-methylguanosine + phosphate. It catalyses the reaction CMP + H2O = cytidine + phosphate. The catalysed reaction is a ribonucleoside 5'-phosphate + H2O = a ribonucleoside + phosphate. In terms of biological role, specifically hydrolyzes 7-methylguanosine monophosphate (m(7)GMP) to 7-methylguanosine and inorganic phosphate. The specific activity for m(7)GMP may protect cells against undesired salvage of m(7)GMP and its incorporation into nucleic acids. Also has weak activity for CMP. UMP and purine nucleotides are poor substrates. The chain is 7-methylguanosine phosphate-specific 5'-nucleotidase (Nt5c3b) from Mus musculus (Mouse).